A 295-amino-acid polypeptide reads, in one-letter code: 4-hydroxy-tetrahydrodipicolinate synthase (295 aa).

Residue T46 coordinates pyruvate. The Proton donor/acceptor role is filled by Y135. The Schiff-base intermediate with substrate role is filled by K164. I205 is a pyruvate binding site.

The protein belongs to the DapA family. In terms of assembly, homotetramer; dimer of dimers.

The protein resides in the cytoplasm. The catalysed reaction is L-aspartate 4-semialdehyde + pyruvate = (2S,4S)-4-hydroxy-2,3,4,5-tetrahydrodipicolinate + H2O + H(+). Its pathway is amino-acid biosynthesis; L-lysine biosynthesis via DAP pathway; (S)-tetrahydrodipicolinate from L-aspartate: step 3/4. Functionally, catalyzes the condensation of (S)-aspartate-beta-semialdehyde [(S)-ASA] and pyruvate to 4-hydroxy-tetrahydrodipicolinate (HTPA). The sequence is that of 4-hydroxy-tetrahydrodipicolinate synthase from Aliarcobacter butzleri (strain RM4018) (Arcobacter butzleri).